Reading from the N-terminus, the 533-residue chain is Capsid protein VP1 (533 aa).

The segment at 333–353 (TIDLQQNPVPQTSSSTTDSPQ) is disordered.

Belongs to the microviridae F protein family.

Its subcellular location is the virion. It is found in the host cytoplasm. Its function is as follows. Assembles to form an icosahedral capsid with a T=1 symmetry. The polypeptide is Capsid protein VP1 (Bdellovibrio bacteriovorus (Bacteriophage phiMH2K)).